The following is a 447-amino-acid chain: Chromosomal replication initiator protein DnaA (447 aa).

Residues 1–74 (MENIEELWSA…MLLEVTGSEL (74 aa)) form a domain I, interacts with DnaA modulators region. Positions 74–108 (LNTKFIIPDSLEEIEEQKPMPKPKQSTDTGDSPKS) are domain II. A disordered region spans residues 85–107 (EEIEEQKPMPKPKQSTDTGDSPK). The segment covering 97 to 107 (KQSTDTGDSPK) has biased composition (polar residues). Residues 109–325 (MLNSKYTFDT…GALIRVVAYS (217 aa)) form a domain III, AAA+ region region. Glycine 153, glycine 155, lysine 156, and threonine 157 together coordinate ATP. The tract at residues 326-447 (SLVNQDIDAS…EELKEKLKSI (122 aa)) is domain IV, binds dsDNA.

It belongs to the DnaA family. As to quaternary structure, oligomerizes as a right-handed, spiral filament on DNA at oriC.

The protein localises to the cytoplasm. Its function is as follows. Plays an essential role in the initiation and regulation of chromosomal replication. ATP-DnaA binds to the origin of replication (oriC) to initiate formation of the DNA replication initiation complex once per cell cycle. Binds the DnaA box (a 9 base pair repeat at the origin) and separates the double-stranded (ds)DNA. Forms a right-handed helical filament on oriC DNA; dsDNA binds to the exterior of the filament while single-stranded (ss)DNA is stabiized in the filament's interior. The ATP-DnaA-oriC complex binds and stabilizes one strand of the AT-rich DNA unwinding element (DUE), permitting loading of DNA polymerase. After initiation quickly degrades to an ADP-DnaA complex that is not apt for DNA replication. Binds acidic phospholipids. This is Chromosomal replication initiator protein DnaA from Oceanobacillus iheyensis (strain DSM 14371 / CIP 107618 / JCM 11309 / KCTC 3954 / HTE831).